The following is a 536-amino-acid chain: Pre-mRNA-splicing factor SLU7 (536 aa).

The disordered stretch occupies residues 22-42 (EARKAGLAPAEVDEDGKEINP). A CCHC-type zinc finger spans residues 94–111 (GACENCGAMTHDKKSCME). Residues 178 to 201 (KLEEKDGEEGDENVASEEEDEEDG) form a disordered region. Residues 182-200 (KDGEEGDENVASEEEDEED) are compositionally biased toward acidic residues.

This sequence belongs to the SLU7 family.

It localises to the nucleus. Functionally, participates in the second catalytic step of pre-mRNA splicing, when the free hydroxyl group of exon I attacks the 3'-splice site to generate spliced mRNA and the excised lariat intron. In Oryza sativa subsp. indica (Rice), this protein is Pre-mRNA-splicing factor SLU7.